Reading from the N-terminus, the 130-residue chain is Small ribosomal subunit protein uS11c (130 aa).

It belongs to the universal ribosomal protein uS11 family. As to quaternary structure, part of the 30S ribosomal subunit.

The protein resides in the plastid. The protein localises to the chloroplast. The polypeptide is Small ribosomal subunit protein uS11c (Pinus koraiensis (Korean pine)).